We begin with the raw amino-acid sequence, 96 residues long: MARSIKKGPFADKHLTKKVEDANKGNKKSVIKTWSRRSTILPDFVGHTFAVHNGRKFVPVFVTENMVGHKLGEFAPTRTFHGHSAEKKAAAAPARK.

The segment at 1–30 is disordered; it reads MARSIKKGPFADKHLTKKVEDANKGNKKSV. The span at 9–24 shows a compositional bias: basic and acidic residues; sequence PFADKHLTKKVEDANK.

Belongs to the universal ribosomal protein uS19 family.

Its function is as follows. Protein S19 forms a complex with S13 that binds strongly to the 16S ribosomal RNA. The chain is Small ribosomal subunit protein uS19 from Anaeromyxobacter sp. (strain Fw109-5).